A 270-amino-acid chain; its full sequence is DNA-directed RNA polymerase subunit Rpo3 (270 aa).

Positions 206, 209, and 212 each coordinate [3Fe-4S] cluster.

Belongs to the archaeal Rpo3/eukaryotic RPB3 RNA polymerase subunit family. Part of the RNA polymerase complex. It depends on [3Fe-4S] cluster as a cofactor.

Its subcellular location is the cytoplasm. It catalyses the reaction RNA(n) + a ribonucleoside 5'-triphosphate = RNA(n+1) + diphosphate. Functionally, DNA-dependent RNA polymerase (RNAP) catalyzes the transcription of DNA into RNA using the four ribonucleoside triphosphates as substrates. This Methanosphaera stadtmanae (strain ATCC 43021 / DSM 3091 / JCM 11832 / MCB-3) protein is DNA-directed RNA polymerase subunit Rpo3.